A 547-amino-acid chain; its full sequence is Solute carrier family 22 member 7 (547 aa).

12 consecutive transmembrane segments (helical) span residues 21-41, 145-165, 173-193, 203-223, 233-253, 258-278, 345-365, 374-396, 403-423, 431-451, 465-485, and 492-512; these read VALLALPRVLLPMHFLLPIFL, ATSTFFFAGVLVGAVAFGYLS, LLLVAYVSALVLGLVSAASVS, LTGTALAGFTIIVMPLELEWL, VLSSTFWTGGVMLLALVGYLI, WLLLAVTLPCAPGILSLWWVP, ISLCCMVVWFGVNFSYYGLSL, VYQTQLLFGAVELPSKLLVYLSV, LTLAGTLLGTSLSLGFRLLVS, TALAVLGKGFSEAAFTTAYLF, MGLTALVGRLGGSLAPLAALL, and LPKLAYGGIALLAACTALLLP. Residues 521 to 547 form a disordered region; the sequence is ETIQDVERKSAPSSLQEEEMPMKQVQD.

It belongs to the major facilitator (TC 2.A.1) superfamily. Organic cation transporter (TC 2.A.1.19) family.

It is found in the basolateral cell membrane. The protein resides in the apical cell membrane. Its subcellular location is the cell membrane. The enzyme catalyses orotate(out) + L-glutamate(in) = orotate(in) + L-glutamate(out). It catalyses the reaction 3',5'-cyclic GMP(in) = 3',5'-cyclic GMP(out). The catalysed reaction is GMP(in) = GMP(out). It carries out the reaction 2'-deoxyguanosine(in) = 2'-deoxyguanosine(out). The enzyme catalyses GDP(in) = GDP(out). It catalyses the reaction guanosine(in) = guanosine(out). The catalysed reaction is GTP(in) = GTP(out). It carries out the reaction 3',5'-cyclic AMP(in) = 3',5'-cyclic AMP(out). The enzyme catalyses creatinine(in) = creatinine(out). It catalyses the reaction prostaglandin E2(out) = prostaglandin E2(in). The catalysed reaction is 2-oxoglutarate(in) = 2-oxoglutarate(out). It carries out the reaction glutarate(in) = glutarate(out). The enzyme catalyses urate(out) = urate(in). It catalyses the reaction estrone 3-sulfate(out) = estrone 3-sulfate(in). Its function is as follows. Functions as a Na(+)-independent bidirectional multispecific transporter. Contributes to the renal and hepatic elimination of endogenous organic compounds from the systemic circulation into the urine and bile, respectively. Capable of transporting a wide range of purine and pyrimidine nucleobases, nucleosides and nucleotides, with cGMP, 2'deoxyguanosine and GMP being the preferred substrates. Functions as a pH- and chloride-independent cGMP bidirectional facilitative transporter that can regulate both intracellular and extracellular levels of cGMP and may be involved in cGMP signaling pathways. Mediates orotate/glutamate bidirectional exchange and most likely display a physiological role in hepatic release of glutamate into the blood. Involved in renal secretion and possible reabsorption of creatinine. Able to uptake prostaglandin E2 (PGE2) and may contribute to PGE2 renal excretion. Also transports alpha-ketoglutarate and urate. Apart from the orotate/glutamate exchange, the counterions for the uptake of other SLC22A7/OAT2 substrates remain to be identified. The polypeptide is Solute carrier family 22 member 7 (SLC22A7) (Sus scrofa (Pig)).